Here is a 434-residue protein sequence, read N- to C-terminus: MKPSKHLIFALFALAISQPTMAAPQPIDRVAVQINDGIVLESEITNMIDTVKANARAANQSLPSDSALRTQVIERLILTRLQLQMADRIGLHIGDLQLDQAIENIAREQKMTVAQMQQKIESEGLSFGQYREQLREEITLGEIQRIQVQRRIQVSPQEITGLVKLIQEQGMKDVEYQIGHILIDVPNNPNSEQLEASSKRANAVLERLKSGEDFRRTAIASSSGPKALEGGIWDYMNINEMPTLFAEVINGAKKGDIIGPIKSGAGFHIIKIMDARGLQTKEIEEVRARHILLKPSPILSEDRAKAMLEQFLKQIRSGEAKFEDLARQYSEDPGSATKGGELGWAEPSIYVPEFAQTLNSLSPDQISEPFRTTHGWHITQLEERRKTDATDQFNTNRAHQLIFRRKFNEELQNWLDEMRADAYIEVFQPESNRG.

An N-terminal signal peptide occupies residues 1–22 (MKPSKHLIFALFALAISQPTMA). 2 consecutive PpiC domains span residues 173-274 (DVEY…KIMD) and 283-383 (IEEV…QLEE).

It localises to the periplasm. The catalysed reaction is [protein]-peptidylproline (omega=180) = [protein]-peptidylproline (omega=0). In terms of biological role, chaperone involved in the correct folding and assembly of outer membrane proteins. Recognizes specific patterns of aromatic residues and the orientation of their side chains, which are found more frequently in integral outer membrane proteins. May act in both early periplasmic and late outer membrane-associated steps of protein maturation. This chain is Chaperone SurA, found in Shewanella sp. (strain MR-7).